The chain runs to 145 residues: 3-hydroxyacyl-[acyl-carrier-protein] dehydratase FabZ (145 aa).

The active site involves H49.

Belongs to the thioester dehydratase family. FabZ subfamily.

Its subcellular location is the cytoplasm. It catalyses the reaction a (3R)-hydroxyacyl-[ACP] = a (2E)-enoyl-[ACP] + H2O. Functionally, involved in unsaturated fatty acids biosynthesis. Catalyzes the dehydration of short chain beta-hydroxyacyl-ACPs and long chain saturated and unsaturated beta-hydroxyacyl-ACPs. The polypeptide is 3-hydroxyacyl-[acyl-carrier-protein] dehydratase FabZ (Rickettsia typhi (strain ATCC VR-144 / Wilmington)).